The following is a 686-amino-acid chain: Acyl-CoA synthetase short-chain family member 3, mitochondrial (686 aa).

The transit peptide at 1-29 directs the protein to the mitochondrion; it reads MKPSWLQCRKVTGAGGLGGSLPASSPARG. Residue 226–229 coordinates CoA; sequence EPGR. ATP is bound by residues 424-426 and 445-450; these read GER and DHWWQT. N6-succinyllysine is present on Lys-517. Position 523 is an N6-acetyllysine (Lys-523). 3 residues coordinate ATP: Asp-538, Arg-553, and Arg-564. Arg-623 is a binding site for CoA.

It belongs to the ATP-dependent AMP-binding enzyme family.

The protein localises to the mitochondrion matrix. It catalyses the reaction acetate + ATP + CoA = acetyl-CoA + AMP + diphosphate. It carries out the reaction propanoate + ATP + CoA = propanoyl-CoA + AMP + diphosphate. The catalysed reaction is butanoate + ATP + CoA = butanoyl-CoA + AMP + diphosphate. In terms of biological role, catalyzes the synthesis of acetyl-CoA from short-chain fatty acids. Propionate is the preferred substrate but can also utilize acetate and butyrate with a much lower affinity. This chain is Acyl-CoA synthetase short-chain family member 3, mitochondrial (ACSS3), found in Bos taurus (Bovine).